The following is a 145-amino-acid chain: Ribonuclease H (145 aa).

One can recognise an RNase H type-1 domain in the interval 1–141 (MQEVIIYSDG…ADALANRGVA (141 aa)). Residues Asp9, Glu47, Asp69, and Asp133 each coordinate Mg(2+).

This sequence belongs to the RNase H family. As to quaternary structure, monomer. Mg(2+) is required as a cofactor.

Its subcellular location is the cytoplasm. It carries out the reaction Endonucleolytic cleavage to 5'-phosphomonoester.. In terms of biological role, endonuclease that specifically degrades the RNA of RNA-DNA hybrids. This Cupriavidus pinatubonensis (strain JMP 134 / LMG 1197) (Cupriavidus necator (strain JMP 134)) protein is Ribonuclease H.